We begin with the raw amino-acid sequence, 179 residues long: UPF0227 protein Shewmr7_1806 (179 aa).

Belongs to the UPF0227 family.

The sequence is that of UPF0227 protein Shewmr7_1806 from Shewanella sp. (strain MR-7).